The primary structure comprises 119 residues: Beta-2-microglobulin (119 aa).

An N-terminal signal peptide occupies residues 1 to 20; the sequence is MSRSVALAVLALLSLSGLEA. The 89-residue stretch at 25–113 folds into the Ig-like C1-type domain; that stretch reads PKIQVYSRHP…HVTLSQPKIV (89 aa). Cysteines 45 and 100 form a disulfide.

The protein belongs to the beta-2-microglobulin family. Heterodimer of an alpha chain and a beta chain. Beta-2-microglobulin is the beta-chain of major histocompatibility complex class I molecules. Forms a heterotrimer with MR1 and a metabolite antigen.

The protein localises to the secreted. Functionally, component of the class I major histocompatibility complex (MHC). Involved in the presentation of peptide antigens to the immune system. In Pan troglodytes (Chimpanzee), this protein is Beta-2-microglobulin (B2M).